A 159-amino-acid chain; its full sequence is 2-C-methyl-D-erythritol 2,4-cyclodiphosphate synthase (159 aa).

A divalent metal cation is bound by residues aspartate 10 and histidine 12. 4-CDP-2-C-methyl-D-erythritol 2-phosphate is bound by residues 10-12 (DVH) and 37-38 (HS). Histidine 45 contacts a divalent metal cation. Residues 59-61 (DIG), 64-68 (FPDTD), 103-109 (AQAPKML), 135-138 (TTTE), phenylalanine 142, and arginine 145 contribute to the 4-CDP-2-C-methyl-D-erythritol 2-phosphate site.

Belongs to the IspF family. Homotrimer. A divalent metal cation is required as a cofactor.

It catalyses the reaction 4-CDP-2-C-methyl-D-erythritol 2-phosphate = 2-C-methyl-D-erythritol 2,4-cyclic diphosphate + CMP. It functions in the pathway isoprenoid biosynthesis; isopentenyl diphosphate biosynthesis via DXP pathway; isopentenyl diphosphate from 1-deoxy-D-xylulose 5-phosphate: step 4/6. In terms of biological role, involved in the biosynthesis of isopentenyl diphosphate (IPP) and dimethylallyl diphosphate (DMAPP), two major building blocks of isoprenoid compounds. Catalyzes the conversion of 4-diphosphocytidyl-2-C-methyl-D-erythritol 2-phosphate (CDP-ME2P) to 2-C-methyl-D-erythritol 2,4-cyclodiphosphate (ME-CPP) with a corresponding release of cytidine 5-monophosphate (CMP). This is 2-C-methyl-D-erythritol 2,4-cyclodiphosphate synthase from Francisella tularensis subsp. novicida (strain U112).